A 340-amino-acid chain; its full sequence is UDP-3-O-acylglucosamine N-acyltransferase (340 aa).

Residue His-237 is the Proton acceptor of the active site.

This sequence belongs to the transferase hexapeptide repeat family. LpxD subfamily. As to quaternary structure, homotrimer.

The catalysed reaction is a UDP-3-O-[(3R)-3-hydroxyacyl]-alpha-D-glucosamine + a (3R)-hydroxyacyl-[ACP] = a UDP-2-N,3-O-bis[(3R)-3-hydroxyacyl]-alpha-D-glucosamine + holo-[ACP] + H(+). The protein operates within bacterial outer membrane biogenesis; LPS lipid A biosynthesis. Its function is as follows. Catalyzes the N-acylation of UDP-3-O-acylglucosamine using 3-hydroxyacyl-ACP as the acyl donor. Is involved in the biosynthesis of lipid A, a phosphorylated glycolipid that anchors the lipopolysaccharide to the outer membrane of the cell. This is UDP-3-O-acylglucosamine N-acyltransferase from Desulfosudis oleivorans (strain DSM 6200 / JCM 39069 / Hxd3) (Desulfococcus oleovorans).